A 35-amino-acid polypeptide reads, in one-letter code: Natriuretic peptide TNPb (35 aa).

Cysteine 9 and cysteine 25 are oxidised to a cystine.

In terms of tissue distribution, expressed by the venom gland.

The protein resides in the secreted. Its function is as follows. Snake venom natriuretic peptide that exhibits vasoactive and probable hypotensive activity. Is only weakly active on natriuretic peptide receptor-C (NPR3). Stimulates cGMP production through the natriuretic peptide receptor 1 (NPR1) with moderate potencies for the rat NPR1 (EC(50)=1200 nM), and very weak potencies over human NPR1 (30% activation at 10 uM). In vivo, does not impact systolic and diastolic blood pressure, as well as heart rate, when intravenously injected in conscious rabbits. Does not affect the bradycardia due to cardiac afferent stimulation (Bezold-Jarisch reflex). The sequence is that of Natriuretic peptide TNPb from Oxyuranus microlepidotus (Inland taipan).